A 1068-amino-acid chain; its full sequence is tRNA wybutosine-synthesizing protein 4 (1068 aa).

Residues 1-31 (MCPPEQPAKAMAPSKSNQAAKSAVPTKEEKS) are disordered. S-adenosyl-L-methionine-binding positions include arginine 81, glycine 107, aspartate 134, 181-182 (DL), and glutamate 208. The region spanning 876 to 1024 (ADFPSLSSDF…ALGRDVYGNR (149 aa)) is the JmjC domain.

The protein belongs to the methyltransferase superfamily. LCMT family.

It catalyses the reaction 7-[(3S)-3-amino-3-carboxypropyl]wyosine(37) in tRNA(Phe) + S-adenosyl-L-methionine = 7-[(3S)-(3-amino-3-methoxycarbonyl)propyl]wyosine(37) in tRNA(Phe) + S-adenosyl-L-homocysteine. It carries out the reaction 7-[(3S)-(3-amino-3-methoxycarbonyl)propyl]wyosine(37) in tRNA(Phe) + S-adenosyl-L-methionine + CO2 = wybutosine(37) in tRNA(Phe) + S-adenosyl-L-homocysteine + 2 H(+). It participates in tRNA modification; wybutosine-tRNA(Phe) biosynthesis. Functionally, probable S-adenosyl-L-methionine-dependent methyltransferase that acts as a component of the wybutosine biosynthesis pathway. Wybutosine is a hyper modified guanosine with a tricyclic base found at the 3'-position adjacent to the anticodon of eukaryotic phenylalanine tRNA. May methylate the carboxyl group of leucine residues to form alpha-leucine ester residues. This chain is tRNA wybutosine-synthesizing protein 4 (ppm2), found in Emericella nidulans (strain FGSC A4 / ATCC 38163 / CBS 112.46 / NRRL 194 / M139) (Aspergillus nidulans).